The sequence spans 152 residues: SsrA-binding protein (152 aa).

It belongs to the SmpB family.

Its subcellular location is the cytoplasm. In terms of biological role, required for rescue of stalled ribosomes mediated by trans-translation. Binds to transfer-messenger RNA (tmRNA), required for stable association of tmRNA with ribosomes. tmRNA and SmpB together mimic tRNA shape, replacing the anticodon stem-loop with SmpB. tmRNA is encoded by the ssrA gene; the 2 termini fold to resemble tRNA(Ala) and it encodes a 'tag peptide', a short internal open reading frame. During trans-translation Ala-aminoacylated tmRNA acts like a tRNA, entering the A-site of stalled ribosomes, displacing the stalled mRNA. The ribosome then switches to translate the ORF on the tmRNA; the nascent peptide is terminated with the 'tag peptide' encoded by the tmRNA and targeted for degradation. The ribosome is freed to recommence translation, which seems to be the essential function of trans-translation. The sequence is that of SsrA-binding protein from Rickettsia massiliae (strain Mtu5).